An 88-amino-acid chain; its full sequence is UPF0223 protein BH2638 (88 aa).

The protein belongs to the UPF0223 family.

The polypeptide is UPF0223 protein BH2638 (Halalkalibacterium halodurans (strain ATCC BAA-125 / DSM 18197 / FERM 7344 / JCM 9153 / C-125) (Bacillus halodurans)).